The sequence spans 159 residues: NAD(P)H-quinone oxidoreductase subunit N (159 aa).

Belongs to the complex I NdhN subunit family. As to quaternary structure, NDH-1 can be composed of about 15 different subunits; different subcomplexes with different compositions have been identified which probably have different functions.

It localises to the cell inner membrane. It carries out the reaction a plastoquinone + NADH + (n+1) H(+)(in) = a plastoquinol + NAD(+) + n H(+)(out). The catalysed reaction is a plastoquinone + NADPH + (n+1) H(+)(in) = a plastoquinol + NADP(+) + n H(+)(out). Functionally, NDH-1 shuttles electrons from an unknown electron donor, via FMN and iron-sulfur (Fe-S) centers, to quinones in the respiratory and/or the photosynthetic chain. The immediate electron acceptor for the enzyme in this species is believed to be plastoquinone. Couples the redox reaction to proton translocation, and thus conserves the redox energy in a proton gradient. Cyanobacterial NDH-1 also plays a role in inorganic carbon-concentration. The polypeptide is NAD(P)H-quinone oxidoreductase subunit N (Gloeobacter violaceus (strain ATCC 29082 / PCC 7421)).